Reading from the N-terminus, the 46-residue chain is Esculentin-1HSa (46 aa).

C40 and C46 are disulfide-bonded.

Expressed by the skin glands.

The protein localises to the secreted. In terms of biological role, has antibacterial activity against the Gram-positive bacterium S.aureus ATCC 25923 (MIC=12 uM) and the Gram-negative bacterium E.coli ATCC 25726 (MIC=12 uM). The polypeptide is Esculentin-1HSa (Odorrana hosii (Hose's rock frog)).